Consider the following 262-residue polypeptide: Type III pantothenate kinase (262 aa).

9–16 lines the ATP pocket; it reads DAGNSRIK. Substrate-binding positions include tyrosine 96 and 103-106; that span reads GSDR. Aspartate 105 functions as the Proton acceptor in the catalytic mechanism. Threonine 129 contributes to the ATP binding site. Threonine 189 is a substrate binding site.

This sequence belongs to the type III pantothenate kinase family. As to quaternary structure, homodimer. It depends on NH4(+) as a cofactor. Requires K(+) as cofactor.

The protein resides in the cytoplasm. The enzyme catalyses (R)-pantothenate + ATP = (R)-4'-phosphopantothenate + ADP + H(+). It functions in the pathway cofactor biosynthesis; coenzyme A biosynthesis; CoA from (R)-pantothenate: step 1/5. Functionally, catalyzes the phosphorylation of pantothenate (Pan), the first step in CoA biosynthesis. In Burkholderia multivorans (strain ATCC 17616 / 249), this protein is Type III pantothenate kinase.